The chain runs to 556 residues: Cholesterol oxidase (556 aa).

5 residues coordinate FAD: Gly-18, Glu-37, Gly-88, Ala-93, and Val-235. The Proton acceptor role is filled by His-471. Gly-504 contacts FAD.

Belongs to the GMC oxidoreductase family. FAD serves as cofactor.

It catalyses the reaction cholesterol + O2 = cholest-5-en-3-one + H2O2. The catalysed reaction is cholest-5-en-3-one = cholest-4-en-3-one. It participates in steroid metabolism; cholesterol degradation. Functionally, bifunctional enzyme that catalyzes the oxidation and isomerization of cholesterol to cholestenone (cholest-4-en-3-one), an initial step in the cholesterol degradation process. In Acinetobacter baumannii, this protein is Cholesterol oxidase.